We begin with the raw amino-acid sequence, 161 residues long: Cap-associated protein CAF20 (161 aa).

The span at 52-72 shows a compositional bias: basic residues; sequence HFGRRRSSHHHGRPKIKHNKP. The segment at 52–108 is disordered; the sequence is HFGRRRSSHHHGRPKIKHNKPKVTTDSDGWCTFEAKKKGSGEDDEEETETTPTSTVP. Residues serine 78 and serine 91 each carry the phosphoserine modification. 3 positions are modified to phosphothreonine: threonine 99, threonine 101, and threonine 102. At serine 154 the chain carries Phosphoserine.

This sequence belongs to the CAF20 family. In terms of assembly, interacts with TIF45. Post-translationally, phosphorylated by casein kinase II complex (CK2).

The protein resides in the cytoplasm. In terms of biological role, acts as an inhibitor of cap-dependent translation. Competes with eIF4G1/TIF4631 and EAP1 for binding to eIF4E/TIF45 and interferes with the formation of the eIF4F complex, inhibiting translation and stabilizing mRNA. Binding affinity for eIF4E/TIF45 is 10-fold less than that of eIF4G1/TIF4631. Required for induction of pseudohyphal growth in response to nitrogen limitation, probably by regulating STE12 translation. This is Cap-associated protein CAF20 (CAF20) from Saccharomyces cerevisiae (strain ATCC 204508 / S288c) (Baker's yeast).